Reading from the N-terminus, the 202-residue chain is FMN reductase (NADH) RutF (202 aa).

Residues 168–191 show a composition bias toward low complexity; it reads PRAPRGGSAPAEPARGARAIGARP. Residues 168–202 are disordered; it reads PRAPRGGSAPAEPARGARAIGARPPEGPVLALRSA.

This sequence belongs to the non-flavoprotein flavin reductase family. RutF subfamily.

The catalysed reaction is FMNH2 + NAD(+) = FMN + NADH + 2 H(+). Catalyzes the reduction of FMN to FMNH2 which is used to reduce pyrimidine by RutA via the Rut pathway. In Methylorubrum populi (strain ATCC BAA-705 / NCIMB 13946 / BJ001) (Methylobacterium populi), this protein is FMN reductase (NADH) RutF.